The chain runs to 831 residues: Histone acetyltransferase SAS3 (831 aa).

An MYST-type HAT domain is found at 267–573; the sequence is VWFSQIEYIV…VKYDKLLWEP (307 aa). Residues 300 to 325 form a C2HC MYST-type zinc finger; it reads VFICEFCLKYMTSRYTFYRHQLKCLT. The residue at position 367 (Lys-367) is an N6-acetyllysine; by autocatalysis. Residues 419-421 and 426-432 each bind acetyl-CoA; these read ILT and QRKGYGQ. The active-site Proton donor/acceptor is the Glu-452. Ser-456 contacts acetyl-CoA. Disordered regions lie at residues 614 to 639 and 719 to 813; these read ENYNNSRAHNKRRRRRRRSSEHKTSK and PLGN…SHIR. Residues 621-633 are compositionally biased toward basic residues; sequence AHNKRRRRRRRSS. 2 stretches are compositionally biased toward acidic residues: residues 736-746 and 755-794; these read EQDEVENDVDT and KEDEDEDEDFTLDDDIEDEQISEENDEEEDTYEEDSDDDE. Residues 795–812 are compositionally biased toward basic and acidic residues; sequence DGKRKGQEQDENDIESHI.

It belongs to the MYST (SAS/MOZ) family. As to quaternary structure, component of the NuA3 histone acetyltransferase (HAT) complex. The NuA3 HAT complex has 2 functionally distinct forms that participate in transcription. The NuA3a HAT complex is composed of at least NTO1, SAS3, TAF14, YNG1 and EAF6. The NuA3b HAT complex contains an additional subunit, PDP3. SAS3 interacts with CDC68/SPT16. Post-translationally, autoacetylation at Lys-367 is required for proper function.

It localises to the nucleus. The catalysed reaction is L-lysyl-[protein] + acetyl-CoA = N(6)-acetyl-L-lysyl-[protein] + CoA + H(+). Catalytic component of the NuA3 histone acetyltransferase complex, that acetylates H3K14. The NuA3 HAT complex has 2 functionally distinct forms. NuA3a binds H3K4me3, through the PHD finger of YNG1, and acetylates H3K14 at the promoter region of actively transcribed genes to promote transcription initiation. NuA3b binds H3K36me3 at the coding regions of actively transcribed genes, through the PWWP domain of PDP3, and coordinates transcription elongation. In vitro, SAS3 acetylates free histones H3 and H4. It is involved in silencing the HMR locus. The chain is Histone acetyltransferase SAS3 from Saccharomyces cerevisiae (strain ATCC 204508 / S288c) (Baker's yeast).